The following is a 248-amino-acid chain: Protein LIFEGUARD 3 (248 aa).

Transmembrane regions (helical) follow at residues 42–62 (VYSI…TVVT), 74–94 (GLGL…LCPL), 105–125 (YLLL…TCAF), 130–150 (VILE…LYTF), 165–185 (FLFG…LFPL), 188–208 (VSVM…IVYD), and 222–242 (IWAA…LLTV).

Belongs to the BI1 family.

The protein localises to the membrane. The polypeptide is Protein LIFEGUARD 3 (Arabidopsis thaliana (Mouse-ear cress)).